A 710-amino-acid chain; its full sequence is Bifunctional lysine-specific demethylase and histidyl-hydroxylase NO66 (710 aa).

Residues 103–137 (TDEMNKTKKKQKKIMKKEIRKRTKRKRKSVNKREL) form a disordered region. Over residues 109-132 (TKKKQKKIMKKEIRKRTKRKRKSV) the composition is skewed to basic residues. Residues 359–506 (CSIQLTNPQS…DLLERVIPPA (148 aa)) form the JmjC domain. His405, Asp407, and His472 together coordinate Fe cation.

Belongs to the ROX family. NO66 subfamily. Fe(2+) serves as cofactor.

The protein resides in the nucleus. It carries out the reaction N(6),N(6)-dimethyl-L-lysyl(36)-[histone H3] + 2 2-oxoglutarate + 2 O2 = L-lysyl(36)-[histone H3] + 2 formaldehyde + 2 succinate + 2 CO2. Oxygenase that can act as both a histone lysine demethylase and a ribosomal histidine hydroxylase. Specifically demethylates 'Lys-4' (H3K4me) and 'Lys-36' (H3K36me) of histone H3, thereby playing a central role in histone code. The polypeptide is Bifunctional lysine-specific demethylase and histidyl-hydroxylase NO66 (Brugia malayi (Filarial nematode worm)).